The sequence spans 147 residues: NADH-quinone oxidoreductase subunit A (147 aa).

A run of 3 helical transmembrane segments spans residues 16-36, 68-88, and 98-118; these read FAIF…GGWF, FYLV…LFAW, and VGFV…VYLV.

This sequence belongs to the complex I subunit 3 family. As to quaternary structure, NDH-1 is composed of 13 different subunits. Subunits NuoA, H, J, K, L, M, N constitute the membrane sector of the complex.

The protein localises to the cell inner membrane. It catalyses the reaction a quinone + NADH + 5 H(+)(in) = a quinol + NAD(+) + 4 H(+)(out). Its function is as follows. NDH-1 shuttles electrons from NADH, via FMN and iron-sulfur (Fe-S) centers, to quinones in the respiratory chain. The immediate electron acceptor for the enzyme in this species is believed to be ubiquinone. Couples the redox reaction to proton translocation (for every two electrons transferred, four hydrogen ions are translocated across the cytoplasmic membrane), and thus conserves the redox energy in a proton gradient. The polypeptide is NADH-quinone oxidoreductase subunit A (Shigella boydii serotype 18 (strain CDC 3083-94 / BS512)).